A 469-amino-acid polypeptide reads, in one-letter code: MMKNRVTNIHFVGIGGVGMSGIAEVLHNLGFKVSGSDQARNAATEHLGSLGIQVYPGHTAEHVNGADVVVTSTAVKKENPEVVAALEQQIPVIPRALMLAELMRFRDGIAIAGTHGKTTTTSLTASILGAAGLDPTFVIGGKLNAAGTNARLGKGEYIVAEADESDASFLHLTPIMSVVTNIDEDHMDTYGHSVEKLHQAFIDFIHRMPFYGKAFLCIDSEHVRAILPKVSKPYATYGLDDTADIYATDIENVGAQMKFTVHVQMKGHEQGSFEVVLNMPGRHNVLNALAAIGVALEVGASVEAIQKGLLGFEGVGRRFQKYGDIKLPNGGTALLVDDYGHHPVEMAATLAAARGAYLEKRLVLAFQPHRYTRTRDLFEDFTKVLNTVDALVLTEVYAAGEEPIAAADSRALARAIRVLGKLEPIYCENVADLPEMLLNVLQDGDIVLNMGAGSINRVPAALLALSKQI.

Residue 113-119 (GTHGKTT) participates in ATP binding.

It belongs to the MurCDEF family.

Its subcellular location is the cytoplasm. The catalysed reaction is UDP-N-acetyl-alpha-D-muramate + L-alanine + ATP = UDP-N-acetyl-alpha-D-muramoyl-L-alanine + ADP + phosphate + H(+). It functions in the pathway cell wall biogenesis; peptidoglycan biosynthesis. Its function is as follows. Cell wall formation. The sequence is that of UDP-N-acetylmuramate--L-alanine ligase from Neisseria meningitidis serogroup B (strain ATCC BAA-335 / MC58).